The following is a 1040-amino-acid chain: Multidrug resistance protein MdtB (1040 aa).

The next 12 membrane-spanning stretches (helical) occupy residues 16–36 (FIMRPVATTLLMVAILIAGII), 342–362 (DTQFELMLAMALVVMIIYVFL), 369–389 (IIPAVAVPLSLVGTFAVMVFL), 396–416 (LTLMALTIATGFVVDDAIVVI), 440–460 (IGFTIISLTFSLIAVLIPLLF), 472–492 (FAVTLAVAILISAVVSLTLTP), 537–557 (WATLSVALGTLALSVMLWIVI), 869–889 (LIVAAVVAMYIVLGVLYESFI), 890–910 (HPVTILSTLPTAGVGALLALM), 911–931 (LSGSELDVIAIIGIILLIGIV), 968–988 (ILMTTMAALLGALPLMLSTGV), and 998–1018 (IGMVGGLLVSQVLTLFTTPVI).

This sequence belongs to the resistance-nodulation-cell division (RND) (TC 2.A.6) family. MdtB subfamily. Part of a tripartite efflux system composed of MdtA, MdtB and MdtC. MdtB forms a heteromultimer with MdtC.

The protein localises to the cell inner membrane. In Enterobacter sp. (strain 638), this protein is Multidrug resistance protein MdtB.